Consider the following 754-residue polypeptide: 5-methyltetrahydropteroyltriglutamate--homocysteine methyltransferase (754 aa).

Residues 17–20 (RELK) and lysine 117 each bind 5-methyltetrahydropteroyltri-L-glutamate. L-homocysteine contacts are provided by residues 431 to 433 (IGS) and glutamate 484. Residues 431–433 (IGS) and glutamate 484 each bind L-methionine. Residues 515–516 (RC) and tryptophan 561 each bind 5-methyltetrahydropteroyltri-L-glutamate. Position 599 (aspartate 599) interacts with L-homocysteine. Aspartate 599 is an L-methionine binding site. Position 605 (glutamate 605) interacts with 5-methyltetrahydropteroyltri-L-glutamate. Positions 641, 643, and 665 each coordinate Zn(2+). Residue histidine 694 is the Proton donor of the active site. Residue cysteine 726 coordinates Zn(2+).

This sequence belongs to the vitamin-B12 independent methionine synthase family. Zn(2+) is required as a cofactor.

The catalysed reaction is 5-methyltetrahydropteroyltri-L-glutamate + L-homocysteine = tetrahydropteroyltri-L-glutamate + L-methionine. The protein operates within amino-acid biosynthesis; L-methionine biosynthesis via de novo pathway; L-methionine from L-homocysteine (MetE route): step 1/1. In terms of biological role, catalyzes the transfer of a methyl group from 5-methyltetrahydrofolate to homocysteine resulting in methionine formation. The chain is 5-methyltetrahydropteroyltriglutamate--homocysteine methyltransferase from Salmonella newport (strain SL254).